Reading from the N-terminus, the 265-residue chain is NAD-capped RNA hydrolase NudC (265 aa).

Arg76 contacts substrate. Zn(2+) contacts are provided by Cys106, Cys109, Cys124, and Cys127. Residue Tyr132 participates in substrate binding. Positions 133-256 (PRISPAMMVL…SIAHRLIRHA (124 aa)) constitute a Nudix hydrolase domain. The a divalent metal cation site is built by Ala166, Glu182, and Glu186. Residues 167 to 188 (GFVEPGETLEECVHRETWEEVG) carry the Nudix box motif. Residue 200 to 207 (QSWPFPHS) participates in substrate binding. Glu227 lines the a divalent metal cation pocket. Ala249 provides a ligand contact to substrate.

It belongs to the Nudix hydrolase family. NudC subfamily. Homodimer. The cofactor is Mg(2+). It depends on Mn(2+) as a cofactor. Zn(2+) serves as cofactor.

The catalysed reaction is a 5'-end NAD(+)-phospho-ribonucleoside in mRNA + H2O = a 5'-end phospho-adenosine-phospho-ribonucleoside in mRNA + beta-nicotinamide D-ribonucleotide + 2 H(+). The enzyme catalyses NAD(+) + H2O = beta-nicotinamide D-ribonucleotide + AMP + 2 H(+). It carries out the reaction NADH + H2O = reduced beta-nicotinamide D-ribonucleotide + AMP + 2 H(+). In terms of biological role, mRNA decapping enzyme that specifically removes the nicotinamide adenine dinucleotide (NAD) cap from a subset of mRNAs by hydrolyzing the diphosphate linkage to produce nicotinamide mononucleotide (NMN) and 5' monophosphate mRNA. The NAD-cap is present at the 5'-end of some mRNAs and stabilizes RNA against 5'-processing. Has preference for mRNAs with a 5'-end purine. Catalyzes the hydrolysis of a broad range of dinucleotide pyrophosphates. This is NAD-capped RNA hydrolase NudC from Chromobacterium violaceum (strain ATCC 12472 / DSM 30191 / JCM 1249 / CCUG 213 / NBRC 12614 / NCIMB 9131 / NCTC 9757 / MK).